Consider the following 330-residue polypeptide: Atypical chemokine receptor 1 (330 aa).

Over 1–57 (MGNCLYPVADDNSTKLAIKEDFLIDFPEDYYPDYNETDVEAAAPCHSCSLLNYSSLP) the chain is Extracellular. Residues asparagine 12, asparagine 35, and asparagine 52 are each glycosylated (N-linked (GlcNAc...) asparagine). 2 disulfide bridges follow: cysteine 45–cysteine 270 and cysteine 123–cysteine 189. A helical membrane pass occupies residues 58–78 (FFILVSILGILASGTILYALL). Topologically, residues 79 to 89 (RPLFRWQLYQD) are cytoplasmic. The helical transmembrane segment at 90 to 110 (RSTLVQLAVGSALFSIVVPIL) threads the bilayer. Over 111–123 (ARGLSGALITSLC) the chain is Extracellular. Residues 124-147 (HLAHLVAYGSAFAQALLIGYHACL) traverse the membrane as a helical segment. Residues 148–160 (GPQLGAGQVPGLR) lie on the Cytoplasmic side of the membrane. Residues 161–181 (LGVTVGLWGVAALLSLPVVLG) traverse the membrane as a helical segment. Over 182–201 (SDTSQGLCTVTFSGEWETLR) the chain is Extracellular. A helical transmembrane segment spans residues 202-222 (YIHAAACFAIFVLLPLGLLGT). Residues 223–238 (KGLKTVLGRAPCPWVD) are Cytoplasmic-facing. The chain crosses the membrane as a helical span at residues 239-259 (VLWVWFIFWWPQGMTLGLDSL). Topologically, residues 260 to 281 (VRSKAIVVSTCPAQQALDMLLD) are extracellular. Residues 282-302 (VAEALAILHCVATPLLLAWVC) traverse the membrane as a helical segment. At 303–330 (YQATHTSPPSLPLPTTQTSHLDTLGGKS) the chain is on the cytoplasmic side.

Belongs to the G-protein coupled receptor 1 family. Atypical chemokine receptor subfamily.

Its subcellular location is the early endosome. It localises to the recycling endosome. The protein localises to the membrane. Its function is as follows. Atypical chemokine receptor that controls chemokine levels and localization via high-affinity chemokine binding that is uncoupled from classic ligand-driven signal transduction cascades, resulting instead in chemokine sequestration, degradation, or transcytosis. Also known as interceptor (internalizing receptor) or chemokine-scavenging receptor or chemokine decoy receptor. Has a promiscuous chemokine-binding profile, interacting with inflammatory chemokines of both the CXC and the CC subfamilies but not with homeostatic chemokines. Acts as a receptor for chemokines including CCL2, CCL5, CCL7, CCL11, CCL13, CCL14, CCL17, CXCL5, CXCL6, IL8/CXCL8, CXCL11, GRO, RANTES, MCP-1 and TARC. May regulate chemokine bioavailability and, consequently, leukocyte recruitment through two distinct mechanisms: when expressed in endothelial cells, it sustains the abluminal to luminal transcytosis of tissue-derived chemokines and their subsequent presentation to circulating leukocytes; when expressed in erythrocytes, serves as blood reservoir of cognate chemokines but also as a chemokine sink, buffering potential surges in plasma chemokine levels. The chain is Atypical chemokine receptor 1 (ACKR1) from Bos taurus (Bovine).